Reading from the N-terminus, the 108-residue chain is Dormancy-associated protein homolog 1 (108 aa).

Residues 28 to 59 (DIKGVGEGSSSKTVAAVAGSPGTPTTPGSARK) form a disordered region. Phosphoserine is present on S47. T50 carries the phosphothreonine modification.

It belongs to the DRM1/ARP family. In terms of tissue distribution, expressed mainly in the low bolt.

This is Dormancy-associated protein homolog 1 from Arabidopsis thaliana (Mouse-ear cress).